A 629-amino-acid chain; its full sequence is Smc-like protein Sph1 (629 aa).

2 coiled-coil regions span residues 139 to 282 (LETE…LLDD) and 318 to 487 (AETT…NQFD).

The protein belongs to the Sph1/Sph2 family.

The protein resides in the cytoplasm. Its function is as follows. May play a role in a late step of replication. The chain is Smc-like protein Sph1 (sph1) from Halobacterium salinarum (Halobacterium halobium).